Here is a 242-residue protein sequence, read N- to C-terminus: Ubiquinone biosynthesis O-methyltransferase (242 aa).

The S-adenosyl-L-methionine site is built by arginine 44, glycine 64, aspartate 85, and methionine 129.

It belongs to the methyltransferase superfamily. UbiG/COQ3 family.

It carries out the reaction a 3-demethylubiquinol + S-adenosyl-L-methionine = a ubiquinol + S-adenosyl-L-homocysteine + H(+). It catalyses the reaction a 3-(all-trans-polyprenyl)benzene-1,2-diol + S-adenosyl-L-methionine = a 2-methoxy-6-(all-trans-polyprenyl)phenol + S-adenosyl-L-homocysteine + H(+). The protein operates within cofactor biosynthesis; ubiquinone biosynthesis. Functionally, O-methyltransferase that catalyzes the 2 O-methylation steps in the ubiquinone biosynthetic pathway. In Yersinia pseudotuberculosis serotype O:1b (strain IP 31758), this protein is Ubiquinone biosynthesis O-methyltransferase.